The primary structure comprises 94 residues: C-C motif chemokine 26 (94 aa).

The N-terminal stretch at 1–23 (MMGLSLASAVLLASLLSLHLGTA) is a signal peptide. Disulfide bonds link Cys-33-Cys-57 and Cys-34-Cys-73.

This sequence belongs to the intercrine beta (chemokine CC) family. Monomer. As to expression, ubiquitously expressed at low levels in various tissues including heart and ovary.

The protein localises to the secreted. Chemoattractant for eosinophils and basophils. Acts as a ligand for C-C chemokine receptor CCR3 which triggers Ca(2+) mobilization in eosinophils. Also acts as a ligand for CX3C chemokine receptor CX3CR1, inducing cell chemotaxis. The protein is C-C motif chemokine 26 of Homo sapiens (Human).